Here is a 401-residue protein sequence, read N- to C-terminus: Thermophilic serine proteinase (401 aa).

The signal sequence occupies residues 1–24 (MKFKAIVSLSLAVSMSLFPFLVEA). Residues 25-121 (ASNDGVESPK…AEPNYLFNAA (97 aa)) constitute a propeptide that is removed on maturation. D126 contributes to the Ca(2+) binding site. Residues 133 to 399 (QYGPQNTYTD…YGRINSYNAV (267 aa)) form the Peptidase S8 domain. The Charge relay system role is filled by D160. 6 residues coordinate Ca(2+): P168, D169, D171, D179, D184, and D186. The Charge relay system role is filled by H193. Ca(2+) contacts are provided by E204, N207, T209, and I211. Cysteines 258 and 260 form a disulfide. Na(+) contacts are provided by Y297, V300, and D323. Residue S347 is the Charge relay system of the active site.

It belongs to the peptidase S8 family. Ca(2+) serves as cofactor. The cofactor is Na(+).

The protein localises to the secreted. The polypeptide is Thermophilic serine proteinase (Bacillus sp. (strain AK1)).